The chain runs to 3020 residues: Protein furry homolog (3020 aa).

At Tyr213 the chain carries Phosphotyrosine. 3 disordered regions span residues 1378–1404 (GSSP…LKGN), 1529–1554 (ASGT…ESKI), and 1746–1773 (SSPV…GNLP). Ser1382 and Ser1383 each carry phosphoserine. Residues 1752–1772 (SGLNSSSTSSSISLGGSSGNL) show a composition bias toward low complexity. 2 positions are modified to phosphoserine: Ser1936 and Ser1940. Over residues 1937 to 1956 (RSSSPDLSSSSKLTASRKST) the composition is skewed to low complexity. Disordered stretches follow at residues 1937-2042 (RSSS…PSHV) and 2355-2384 (LQNS…SNSN). The segment covering 1966–1976 (PGSGGGGGGSG) has biased composition (gly residues). Over residues 2016 to 2042 (ACTQQGLSSKTRSNSSLKESLTDPSHV) the composition is skewed to polar residues. Residues 2369 to 2384 (AVTRSASSTSSGSNSN) are compositionally biased toward low complexity. 2 positions are modified to phosphoserine: Ser2427 and Ser2428. Positions 2439–2458 (TSLVSSEDGPREQENMDDTN) are disordered. The residue at position 2495 (Ser2495) is a Phosphoserine. The interval 2508 to 2535 (EERQLSRSTPSLNKMSHEDSDESSEEDL) is disordered. A Phosphothreonine; by CDK1 modification is found at Thr2516. Acidic residues predominate over residues 2526–2535 (DSDESSEEDL). Ser2815 is subject to Phosphoserine.

Belongs to the furry protein family. As to quaternary structure, when phosphorylated by CDK1, interacts with PLK1; this interaction occurs in mitotic cells, but not in interphase cells, and leads to further FRY phosphorylation by PLK1. Post-translationally, phosphorylated by AURKA, CDK1 and PLK1.

Its subcellular location is the cytoplasm. The protein localises to the cytoskeleton. The protein resides in the microtubule organizing center. It localises to the centrosome. It is found in the spindle pole. Functionally, plays a crucial role in the structural integrity of mitotic centrosomes and in the maintenance of spindle bipolarity by promoting PLK1 activity at the spindle poles in early mitosis. May function as a scaffold promoting the interaction between AURKA and PLK1, thereby enhancing AURKA-mediated PLK1 phosphorylation. In Mus musculus (Mouse), this protein is Protein furry homolog (Fry).